We begin with the raw amino-acid sequence, 171 residues long: Co-chaperone protein HscB homolog (171 aa).

Positions N2–E74 constitute a J domain.

This sequence belongs to the HscB family. In terms of assembly, interacts with HscA and stimulates its ATPase activity.

In terms of biological role, co-chaperone involved in the maturation of iron-sulfur cluster-containing proteins. Seems to help targeting proteins to be folded toward HscA. The protein is Co-chaperone protein HscB homolog of Vibrio parahaemolyticus serotype O3:K6 (strain RIMD 2210633).